Consider the following 785-residue polypeptide: Endonuclease MutS2 (785 aa).

ATP is bound at residue 331 to 338; that stretch reads GPNTGGKT. One can recognise a Smr domain in the interval 710 to 785; sequence LDLRGLYADE…GLGVTVVELA (76 aa).

It belongs to the DNA mismatch repair MutS family. MutS2 subfamily. Homodimer. Binds to stalled ribosomes, contacting rRNA.

In terms of biological role, endonuclease that is involved in the suppression of homologous recombination and thus may have a key role in the control of bacterial genetic diversity. Functionally, acts as a ribosome collision sensor, splitting the ribosome into its 2 subunits. Detects stalled/collided 70S ribosomes which it binds and splits by an ATP-hydrolysis driven conformational change. Acts upstream of the ribosome quality control system (RQC), a ribosome-associated complex that mediates the extraction of incompletely synthesized nascent chains from stalled ribosomes and their subsequent degradation. Probably generates substrates for RQC. This chain is Endonuclease MutS2, found in Pelotomaculum thermopropionicum (strain DSM 13744 / JCM 10971 / SI).